The chain runs to 413 residues: Aspartate aminotransferase, cytoplasmic (413 aa).

Residues G39 and W141 each contribute to the L-aspartate site. Phosphoserine is present on S149. N195 contacts L-aspartate. Position 259 is an N6-(pyridoxal phosphate)lysine (K259). N6-succinyllysine is present on K318. R387 contributes to the L-aspartate binding site.

It belongs to the class-I pyridoxal-phosphate-dependent aminotransferase family. As to quaternary structure, homodimer. Pyridoxal 5'-phosphate is required as a cofactor. As to expression, expressed in neurons of the retina. Localizes to the inner and outer plexiform layers, the inner and outer nuclear layer and the outer segments of photoreceptors.

It localises to the cytoplasm. It catalyses the reaction L-aspartate + 2-oxoglutarate = oxaloacetate + L-glutamate. The enzyme catalyses L-cysteine + 2-oxoglutarate = 2-oxo-3-sulfanylpropanoate + L-glutamate. The catalysed reaction is (2S)-2-aminobutanoate + 2-oxoglutarate = 2-oxobutanoate + L-glutamate. It carries out the reaction 3-sulfino-L-alanine + 2-oxoglutarate = 3-sulfinopyruvate + L-glutamate. With respect to regulation, inhibited by calcium ions. Biosynthesis of L-glutamate from L-aspartate or L-cysteine. Important regulator of levels of glutamate, the major excitatory neurotransmitter of the vertebrate central nervous system. Acts as a scavenger of glutamate in brain neuroprotection. The aspartate aminotransferase activity is involved in hepatic glucose synthesis during development and in adipocyte glyceroneogenesis. Using L-cysteine as substrate, regulates levels of mercaptopyruvate, an important source of hydrogen sulfide. Mercaptopyruvate is converted into H(2)S via the action of 3-mercaptopyruvate sulfurtransferase (3MST). Hydrogen sulfide is an important synaptic modulator and neuroprotectant in the brain. The polypeptide is Aspartate aminotransferase, cytoplasmic (Mus musculus (Mouse)).